A 154-amino-acid polypeptide reads, in one-letter code: Ribosome maturation factor RimP (154 aa).

The protein belongs to the RimP family.

It is found in the cytoplasm. Its function is as follows. Required for maturation of 30S ribosomal subunits. This is Ribosome maturation factor RimP from Alkaliphilus oremlandii (strain OhILAs) (Clostridium oremlandii (strain OhILAs)).